The sequence spans 169 residues: U3 small nucleolar ribonucleoprotein protein imp3 (169 aa).

In terms of domain architecture, S4 RNA-binding spans 109-166; that stretch reads RRLPVVMCRLKMCETVSTSVKYVEHGHVRVGPEVITDPAFFVTRNMEDFVTWVDSSKI.

It belongs to the universal ribosomal protein uS4 family. In terms of assembly, component of a heterotrimeric complex containing imp3, imp4 and mpp10.

The protein localises to the nucleus. It localises to the nucleolus. Component of the U3 small nucleolar ribonucleoprotein. Required for the early cleavages at sites A0, A1 and A2 during 18S ribosomal pre-RNA processing. This chain is U3 small nucleolar ribonucleoprotein protein imp3 (RBP), found in Pneumocystis carinii.